A 289-amino-acid polypeptide reads, in one-letter code: MKLIILDHYSQASEWAAKYIRNRIIQFNPGPDKYFTLGLPTGSTPLGCYKKLIEYYKNGDLSFKYVKTFNMDEYVGLPRDHPESYHSFMWNNFFKHIDIHPENTHILDGNAADLQAECDAFEEKIKAAGGIELFVGGIGPDGHIAFNEPGSSLVSRTRVKTLAMDTILANARFFDGDLAKVPTMALTVGVGTVMDAREVMILITGAHKAFALYKAIEEGVNHMWTVSAFQQHPRTVFVCDEDATLELKVKTVKYFKGLMLVHNKLVDPLYSIKEKEIEKSQSSKKPYSD.

At Lys64 the chain carries N6-acetyllysine. Asp72 functions as the Proton acceptor; for enolization step in the catalytic mechanism. Catalysis depends on Asp141, which acts as the For ring-opening step. His143 serves as the catalytic Proton acceptor; for ring-opening step. The active-site For ring-opening step is Glu148. At Thr161 the chain carries Phosphothreonine.

This sequence belongs to the glucosamine/galactosamine-6-phosphate isomerase family. In terms of assembly, homohexamer.

The protein localises to the cytoplasm. It catalyses the reaction alpha-D-glucosamine 6-phosphate + H2O = beta-D-fructose 6-phosphate + NH4(+). It participates in nucleotide-sugar biosynthesis; UDP-N-acetyl-alpha-D-glucosamine biosynthesis; alpha-D-glucosamine 6-phosphate from D-fructose 6-phosphate: step 1/1. With respect to regulation, allosterically activated by N-acetylglucosamine-6-phosphate (GlcNAc6P). Catalyzes the reversible conversion of alpha-D-glucosamine 6-phosphate (GlcN-6P) into beta-D-fructose 6-phosphate (Fru-6P) and ammonium ion, a regulatory reaction step in de novo uridine diphosphate-N-acetyl-alpha-D-glucosamine (UDP-GlcNAc) biosynthesis via hexosamine pathway. Deamination is coupled to aldo-keto isomerization mediating the metabolic flux from UDP-GlcNAc toward Fru-6P. At high ammonium level can drive amination and isomerization of Fru-6P toward hexosamines and UDP-GlcNAc synthesis. Has a role in fine tuning the metabolic fluctuations of cytosolic UDP-GlcNAc and their effects on hyaluronan synthesis that occur during tissue remodeling. Seems to trigger calcium oscillations in mammalian eggs. These oscillations serve as the essential trigger for egg activation and early development of the embryo. The protein is Glucosamine-6-phosphate deaminase 1 of Bos taurus (Bovine).